Here is a 264-residue protein sequence, read N- to C-terminus: 3-methyl-2-oxobutanoate hydroxymethyltransferase (264 aa).

Residues aspartate 45 and aspartate 84 each coordinate Mg(2+). Residues 45–46, aspartate 84, and lysine 112 each bind 3-methyl-2-oxobutanoate; that span reads DS. Glutamate 114 lines the Mg(2+) pocket. The Proton acceptor role is filled by glutamate 181.

It belongs to the PanB family. Homodecamer; pentamer of dimers. Requires Mg(2+) as cofactor.

Its subcellular location is the cytoplasm. The catalysed reaction is 3-methyl-2-oxobutanoate + (6R)-5,10-methylene-5,6,7,8-tetrahydrofolate + H2O = 2-dehydropantoate + (6S)-5,6,7,8-tetrahydrofolate. It functions in the pathway cofactor biosynthesis; (R)-pantothenate biosynthesis; (R)-pantoate from 3-methyl-2-oxobutanoate: step 1/2. Functionally, catalyzes the reversible reaction in which hydroxymethyl group from 5,10-methylenetetrahydrofolate is transferred onto alpha-ketoisovalerate to form ketopantoate. The polypeptide is 3-methyl-2-oxobutanoate hydroxymethyltransferase (Shewanella pealeana (strain ATCC 700345 / ANG-SQ1)).